The following is a 151-amino-acid chain: UPF0208 membrane protein YfbV (151 aa).

2 helical membrane passes run 46 to 65 (YAIRFMPPIAVFTLCWQIAL) and 69 to 91 (LGPAVATALFALSLPMQGLWWLG).

Belongs to the UPF0208 family.

The protein resides in the cell inner membrane. This chain is UPF0208 membrane protein YfbV, found in Escherichia coli O1:K1 / APEC.